The chain runs to 677 residues: MTQVAKKILVTCALPYANGSIHLGHMLEHIQADVWVRYQRMRGHEVNFICADDAHGTPIMLKAQQLGITPEQMIGEMSQEHQTDFAGFDISYDNYHSTHSDENRELSELIYTRLKENGFIKNRTISQLYDPEKGMFLPDRFVKGTCPKCKSPDQYGDNCEVCGATYSPTELIDPKSVVSGATPVMRDSEHFFFDLPSFSEMLQAWTRSGALQEQVANKMQEWFESGLQQWDISRDAPYFGFEIPNAPGKYFYVWLDAPIGYMGSFKNLCDKRGDTTSFDEYWKKDSTAELYHFIGKDIVYFHSLFWPAMLEGSNFRKPTNLFVHGYVTVNGAKMSKSRGTFIKASTWLNHFDADSLRYYYTAKLSSRIDDIDLNLEDFVQRVNADIVNKVVNLASRNAGFISKRFDGVLAAELADPALYKTFTDAAESIGEAWDSREFGKAIREIMALADVANRYVDEQAPWVVAKQEGRDADLQAICTMGLNMFRVLMTWLKPVLPQLAARAEAFLNSELSWDAIQQPLLAHKVNPFKALYNRIEMKQVEALVEASKEEVKATAAPVTGPLADDPIQETITFDDFAKVDLRVALIENAEFVEGSDKLLRLTLDLGGEKRNVFSGIRSAYPDPQPLIGRLTVMVANLAPRKMRFGISEGMVMAAGPGGKDIFLLSPDDGAKPGQQVK.

The short motif at 15-25 (PYANGSIHLGH) is the 'HIGH' region element. Residues cysteine 146, cysteine 149, cysteine 159, and cysteine 162 each contribute to the Zn(2+) site. The 'KMSKS' region signature appears at 333–337 (KMSKS). Lysine 336 is an ATP binding site. One can recognise a tRNA-binding domain in the interval 575 to 677 (DFAKVDLRVA…DGAKPGQQVK (103 aa)).

Belongs to the class-I aminoacyl-tRNA synthetase family. MetG type 1 subfamily. In terms of assembly, homodimer. Requires Zn(2+) as cofactor.

The protein localises to the cytoplasm. The enzyme catalyses tRNA(Met) + L-methionine + ATP = L-methionyl-tRNA(Met) + AMP + diphosphate. In terms of biological role, is required not only for elongation of protein synthesis but also for the initiation of all mRNA translation through initiator tRNA(fMet) aminoacylation. The polypeptide is Methionine--tRNA ligase (Klebsiella pneumoniae subsp. pneumoniae (strain ATCC 700721 / MGH 78578)).